A 220-amino-acid polypeptide reads, in one-letter code: Deoxyribose-phosphate aldolase (220 aa).

Catalysis depends on Asp-89, which acts as the Proton donor/acceptor. Lys-151 functions as the Schiff-base intermediate with acetaldehyde in the catalytic mechanism. The Proton donor/acceptor role is filled by Lys-180.

Belongs to the DeoC/FbaB aldolase family. DeoC type 1 subfamily.

Its subcellular location is the cytoplasm. The catalysed reaction is 2-deoxy-D-ribose 5-phosphate = D-glyceraldehyde 3-phosphate + acetaldehyde. The protein operates within carbohydrate degradation; 2-deoxy-D-ribose 1-phosphate degradation; D-glyceraldehyde 3-phosphate and acetaldehyde from 2-deoxy-alpha-D-ribose 1-phosphate: step 2/2. Its function is as follows. Catalyzes a reversible aldol reaction between acetaldehyde and D-glyceraldehyde 3-phosphate to generate 2-deoxy-D-ribose 5-phosphate. The polypeptide is Deoxyribose-phosphate aldolase (Streptococcus uberis (strain ATCC BAA-854 / 0140J)).